The sequence spans 156 residues: Rhombotin-1 (156 aa).

LIM zinc-binding domains are found at residues 22-84 (KGCA…LFGT) and 86-148 (GNCA…GHLN).

Expressed in the brain and not in the thymus.

It is found in the nucleus. May be involved in gene regulation within neural lineage cells potentially by direct DNA binding or by binding to other transcription factors. The protein is Rhombotin-1 (Lmo1) of Mus musculus (Mouse).